The chain runs to 202 residues: LexA repressor (202 aa).

The segment at residues 29-49 is a DNA-binding region (H-T-H motif); that stretch reads VREICTAVGLKSTSTVHSYLE. Residues Ser-125 and Lys-162 each act as for autocatalytic cleavage activity in the active site.

It belongs to the peptidase S24 family. In terms of assembly, homodimer.

The enzyme catalyses Hydrolysis of Ala-|-Gly bond in repressor LexA.. Its function is as follows. Represses a number of genes involved in the response to DNA damage (SOS response), including recA and lexA. In the presence of single-stranded DNA, RecA interacts with LexA causing an autocatalytic cleavage which disrupts the DNA-binding part of LexA, leading to derepression of the SOS regulon and eventually DNA repair. This chain is LexA repressor, found in Clostridium kluyveri (strain NBRC 12016).